A 162-amino-acid chain; its full sequence is Sorting nexin-12 (162 aa).

The interval 1–20 (MSDTAVADTRRLNSKPQDLT) is disordered. The residue at position 2 (S2) is an N-acetylserine. Y23 carries the post-translational modification Phosphotyrosine. Residues 28–152 (NFLEIDIFNP…HMFLQEEAID (125 aa)) enclose the PX domain. Positions 71, 73, 96, and 119 each coordinate a 1,2-diacyl-sn-glycero-3-phospho-(1D-myo-inositol-3-phosphate). Position 73 is a phosphoserine (S73).

Belongs to the sorting nexin family.

Its subcellular location is the membrane. Its function is as follows. May be involved in several stages of intracellular trafficking. This chain is Sorting nexin-12 (SNX12), found in Homo sapiens (Human).